A 150-amino-acid chain; its full sequence is Transcriptional repressor NrdR (150 aa).

The interval 1-26 (MKCPFCGNSDSKVVDSRPDKGGSGIR) is disordered. The segment at 3–34 (CPFCGNSDSKVVDSRPDKGGSGIRRRRECEQC) is a zinc-finger region. Positions 49-139 (PLVLKKDGRR…VYRSFRDINE (91 aa)) constitute an ATP-cone domain.

The protein belongs to the NrdR family. Zn(2+) is required as a cofactor.

Functionally, negatively regulates transcription of bacterial ribonucleotide reductase nrd genes and operons by binding to NrdR-boxes. This Pelobacter propionicus (strain DSM 2379 / NBRC 103807 / OttBd1) protein is Transcriptional repressor NrdR.